The following is a 177-amino-acid chain: Voltage-dependent L-type calcium channel subunit alpha-1C (177 aa).

The helical transmembrane segment at 27 to 45 (ITFFRLFRVMRLVKLLSRG) threads the bilayer. The chain crosses the membrane as a helical span at residues 64–84 (YVALLIVMLFFIYAVIGMQVF). The N-linked (GlcNAc...) asparagine glycan is linked to N90. Positions 107 to 125 (AVLLLFRCATGEAWQEIML) form an intramembrane region, pore-forming. The short motif at 116–119 (TGEA) is the Selectivity filter of repeat IV element. C133 and C149 are oxidised to a cystine. N-linked (GlcNAc...) asparagine glycosylation occurs at N141. Residues 154-177 (AVFYFISFYMLCAFLIIDLFVAVI) form a helical membrane-spanning segment.

It belongs to the calcium channel alpha-1 subunit (TC 1.A.1.11) family. CACNA1C subfamily. In terms of assembly, component of a calcium channel complex consisting of a pore-forming alpha subunit (CACNA1C) and ancillary beta, gamma and delta subunits. The channel complex contains alpha, beta, gamma and delta subunits in a 1:1:1:1 ratio, i.e. it contains only one of each type of subunit. CACNA1C channel activity is modulated by ancillary subunits, such as CACNB2, CACNB3, CACNA2D1 and CACNA2D4. Post-translationally, phosphorylation by PKA activates the channel.

The protein localises to the cell membrane. Its subcellular location is the perikaryon. It localises to the postsynaptic density membrane. The protein resides in the cell projection. It is found in the dendrite. The protein localises to the sarcolemma. Its subcellular location is the T-tubule. It catalyses the reaction Ca(2+)(in) = Ca(2+)(out). Its activity is regulated as follows. Inhibited by dihydropyridines (DHP), such as isradipine. Channel activity is regulated by Ca(2+) and calmodulin. In terms of biological role, pore-forming, alpha-1C subunit of the voltage-gated calcium channel that gives rise to L-type calcium currents. Mediates influx of calcium ions into the cytoplasm, and thereby triggers calcium release from the sarcoplasm. Plays an important role in excitation-contraction coupling in the heart. Required for normal heart development and normal regulation of heart rhythm. Required for normal contraction of smooth muscle cells in blood vessels and in the intestine. Essential for normal blood pressure regulation via its role in the contraction of arterial smooth muscle cells. Long-lasting (L-type) calcium channels belong to the 'high-voltage activated' (HVA) group. This is Voltage-dependent L-type calcium channel subunit alpha-1C (CACNA1C) from Gallus gallus (Chicken).